The sequence spans 514 residues: Activin receptor type-2A (514 aa).

The first 20 residues, 1–20, serve as a signal peptide directing secretion; that stretch reads MGAATKLAFAVFLISCSSAG. Over 21 to 136 the chain is Extracellular; sequence SILGRSETKE…TSNPVTTKPP (116 aa). Cystine bridges form between C31-C61, C51-C79, C86-C105, C92-C104, and C106-C111. N46, N67, and N88 each carry an N-linked (GlcNAc...) asparagine glycan. Residues 137 to 162 traverse the membrane as a helical segment; that stretch reads LFNTLLYSLVPIMVVAVIVLFSFWMY. Residues 163–514 lie on the Cytoplasmic side of the membrane; that stretch reads RHHKLAYPPV…VDFPPKESSL (352 aa). A Protein kinase domain is found at 193–486; that stretch reads LQLLEVKARG…EERIIQMQKL (294 aa). ATP contacts are provided by residues 199–207 and K220; that span reads KARGRFGCV. Catalysis depends on D323, which acts as the Proton acceptor.

It belongs to the protein kinase superfamily. TKL Ser/Thr protein kinase family. TGFB receptor subfamily.

The protein localises to the cell membrane. It catalyses the reaction L-threonyl-[receptor-protein] + ATP = O-phospho-L-threonyl-[receptor-protein] + ADP + H(+). The catalysed reaction is L-seryl-[receptor-protein] + ATP = O-phospho-L-seryl-[receptor-protein] + ADP + H(+). Its function is as follows. Receptor for activin A, activin B and inhibin A. Involved in transmembrane signaling. This chain is Activin receptor type-2A (acvr2a), found in Xenopus laevis (African clawed frog).